A 1447-amino-acid chain; its full sequence is Sister chromatid cohesion protein PDS5 homolog B (1447 aa).

One copy of the HEAT repeat lies at 383-419; that stretch reads LLVNDHLLNFVRERTLDKRWRVRKEAMMGLAQIYKKY. Lys1136 carries the post-translational modification N6-acetyllysine. Residues 1137–1155 show a composition bias toward polar residues; the sequence is PLSSAGKQSQTKSSRMETV. Residues 1137–1447 form a disordered region; it reads PLSSAGKQSQ…RRRSSKRERR (311 aa). Phosphoserine is present on residues Ser1140, Ser1162, Ser1166, Ser1176, Ser1182, and Ser1191. Residues 1156-1167 show a composition bias toward low complexity; that stretch reads SNASSSSNPSSP. Positions 1172–1184 are enriched in basic and acidic residues; it reads GRLDSTEMDHSEN. A compositionally biased stretch (basic and acidic residues) spans 1196–1214; the sequence is KKSDKREDSDLVRSELEKP. At Ser1221 the chain carries Phosphoserine. A compositionally biased stretch (basic and acidic residues) spans 1225–1243; that stretch reads PEEKLGMDDLSKLVQEQKP. Basic residues predominate over residues 1245–1254; that stretch reads GSQRGRKRGH. Residues 1247–1259 constitute a DNA-binding region (a.T hook 1); sequence QRGRKRGHAASES. Ser1257 and Ser1259 each carry phosphoserine. The segment covering 1265-1274 has biased composition (basic and acidic residues); that stretch reads PEEKRHKEEL. Ser1283 is subject to Phosphoserine. The segment at residues 1287–1299 is a DNA-binding region (a.T hook 2); sequence KGKRGRPPKPLGG. Composition is skewed to basic residues over residues 1309–1318 and 1341–1352; these read TSKKGNKKKP and KSKQQRTSKRAQ. Phosphoserine is present on residues Ser1357 and Ser1365. Residues 1358-1371 are compositionally biased toward polar residues; that stretch reads PETSAVESTQSTPQ. Thr1366 is subject to Phosphothreonine. Position 1368 is a phosphoserine (Ser1368). Thr1369 and Thr1380 each carry phosphothreonine. A DNA-binding region (a.T hook 3) is located at residues 1371 to 1383; the sequence is QKGRGRPSKTPSP. Over residues 1378-1387 the composition is skewed to low complexity; that stretch reads SKTPSPSQPK. Phosphoserine occurs at positions 1382, 1416, and 1419. The span at 1422 to 1432 shows a compositional bias: acidic residues; that stretch reads TTQEGAEEEDI. The segment covering 1437-1447 has biased composition (basic residues); it reads VRRRSSKRERR.

It belongs to the PDS5 family. As to quaternary structure, interacts with the cohesin complex. Interacts with RAD21; the interaction is direct. Interacts with WAPL (via FGF motifs) or CDCA5 (via the FGF motif); the interaction is direct, cohesin-dependent and competitive. As to expression, highly expressed in intact prostate with levels decreasing after castration. Expressed exclusively in prostate cells inhibited from proliferating by long-term androgen exposure.

The protein localises to the nucleus. Its function is as follows. Regulator of sister chromatid cohesion in mitosis which may stabilize cohesin complex association with chromatin. May couple sister chromatid cohesion during mitosis to DNA replication. Cohesion ensures that chromosome partitioning is accurate in both meiotic and mitotic cells and plays an important role in DNA repair. Plays a role in androgen-induced proliferative arrest in prostate cells. The sequence is that of Sister chromatid cohesion protein PDS5 homolog B (Pds5b) from Rattus norvegicus (Rat).